The chain runs to 146 residues: Leptin (146 aa).

A disulfide bond links Cys96 and Cys146.

This sequence belongs to the leptin family.

It localises to the secreted. Its function is as follows. Key player in the regulation of energy balance and body weight control. Once released into the circulation, has central and peripheral effects by binding LEPR, found in many tissues, which results in the activation of several major signaling pathways. In the hypothalamus, acts as an appetite-regulating factor that induces a decrease in food intake and an increase in energy consumption by inducing anorexinogenic factors and suppressing orexigenic neuropeptides, also regulates bone mass and secretion of hypothalamo-pituitary-adrenal hormones. In the periphery, increases basal metabolism, influences reproductive function, regulates pancreatic beta-cell function and insulin secretion, is pro-angiogenic for endothelial cell and affects innate and adaptive immunity. In the arcuate nucleus of the hypothalamus, activates by depolarization POMC neurons inducing FOS and SOCS3 expression to release anorexigenic peptides and inhibits by hyperpolarization NPY neurons inducing SOCS3 with a consequent reduction on release of orexigenic peptides. In addition to its known satiety inducing effect, has a modulatory role in nutrient absorption. In the intestine, reduces glucose absorption by enterocytes by activating PKC and leading to a sequential activation of p38, PI3K and ERK signaling pathways which exerts an inhibitory effect on glucose absorption. Acts as a growth factor on certain tissues, through the activation of different signaling pathways increases expression of genes involved in cell cycle regulation such as CCND1, via JAK2-STAT3 pathway, or VEGFA, via MAPK1/3 and PI3K-AKT1 pathways. May also play an apoptotic role via JAK2-STAT3 pathway and up-regulation of BIRC5 expression. Pro-angiogenic, has mitogenic activity on vascular endothelial cells and plays a role in matrix remodeling by regulating the expression of matrix metalloproteinases (MMPs) and tissue inhibitors of metalloproteinases (TIMPs). In innate immunity, modulates the activity and function of neutrophils by increasing chemotaxis and the secretion of oxygen radicals. Increases phagocytosis by macrophages and enhances secretion of pro-inflammatory mediators. Increases cytotoxic ability of NK cells. Plays a pro-inflammatory role, in synergy with IL1B, by inducing NOS2 which promotes the production of IL6, IL8 and Prostaglandin E2, through a signaling pathway that involves JAK2, PI3K, MAP2K1/MEK1 and MAPK14/p38. In adaptive immunity, promotes the switch of memory T-cells towards T helper-1 cell immune responses. Increases CD4(+)CD25(-) T-cell proliferation and reduces autophagy during TCR (T-cell receptor) stimulation, through MTOR signaling pathway activation and BCL2 up-regulation. The polypeptide is Leptin (LEP) (Ovis aries (Sheep)).